The primary structure comprises 370 residues: MLKVYFLALFLAGCSAFVLDEIRGINIGQSPQKVLVDHVNTVQTSWVAEHNEISEFEMKFKVMDVKFAEPLEKDSDVASELFVRGEIVPEPLPDTFDAREKWPDCNTIKLIRNQATCGSCWAFGAAEVISDRVCIQSNGTQQPVISVEDILSCCGTTCGYGCKGGYSIEALRFWASSGAVTGGDYGGHGCMPYSFAPCTKNCPESTTPSCKTTCQSSYKTEEYKKDKHYGASAYKVTTTKSVTEIQTEIYHYGPVEASYKVYEDFYHYKSGVYHYTSGKLVGGHAVKIIGWGVENGVDYWLIANSWGTSFGEKGFFKIRRGTNECQIEGNVVAGIAKLGTHSETYEDDGGAATSCSFIMCTLMVLTYYFV.

Positions methionine 1–alanine 16 are cleaved as a signal peptide. The propeptide occupies phenylalanine 17–proline 91. Cystine bridges form between cysteine 105–cysteine 134, cysteine 117–cysteine 162, cysteine 153–cysteine 210, cysteine 154–cysteine 158, cysteine 190–cysteine 214, and cysteine 198–cysteine 202. The active site involves cysteine 120. Asparagine 138 carries N-linked (GlcNAc...) asparagine glycosylation. Catalysis depends on residues histidine 284 and asparagine 304.

It belongs to the peptidase C1 family.

The protein is Cathepsin B-like cysteine proteinase 3 (cpr-3) of Caenorhabditis elegans.